A 147-amino-acid chain; its full sequence is DNA-directed RNA polymerase I subunit rpa14 (147 aa).

The disordered stretch occupies residues 71-147 (VQGPPTEELI…TQGVGEKEQS (77 aa)). Over residues 74–84 (PPTEELIIPPE) the composition is skewed to low complexity. Positions 87 to 111 (LETKEEESLKHAREENDDLHLDKET) are enriched in basic and acidic residues. Residues 112-124 (KKRLKKEKKKAAR) are compositionally biased toward basic residues. The segment covering 125–135 (REKEEARKAKA) has biased composition (basic and acidic residues).

In terms of assembly, component of the RNA polymerase I (Pol I) complex consisting of 14 subunits. Part of a Pol I subcomplex consisting of the subunits A14 and A43. Interacts with rpa43. Post-translationally, phosphorylated.

Its subcellular location is the nucleus. The protein localises to the nucleolus. DNA-dependent RNA polymerase catalyzes the transcription of DNA into RNA using the four ribonucleoside triphosphates as substrates. Component of RNA polymerase I which synthesizes ribosomal RNA precursors. A14 seems to play a role in the stability of Pol I subunit A43 and association of rrn3 to Pol I. This is DNA-directed RNA polymerase I subunit rpa14 (ker1) from Schizosaccharomyces pombe (strain 972 / ATCC 24843) (Fission yeast).